The following is a 156-amino-acid chain: Arginine repressor (156 aa).

Belongs to the ArgR family.

Its subcellular location is the cytoplasm. The protein operates within amino-acid biosynthesis; L-arginine biosynthesis [regulation]. Regulates arginine biosynthesis genes. The sequence is that of Arginine repressor from Photobacterium profundum (strain SS9).